Consider the following 126-residue polypeptide: Putative lipoprotein LprD (126 aa).

Positions 1-19 (MSTTRRRRPALVALVTIAA) are cleaved as a signal peptide. Residue Cys-20 is the site of N-palmitoyl cysteine attachment. Residue Cys-20 is the site of S-diacylglycerol cysteine attachment. The helical transmembrane segment at 44-64 (GYALQWPLFAGFCLYTYHNFV) threads the bilayer.

The protein to M.tuberculosis Rv1343c.

The protein resides in the cell membrane. The sequence is that of Putative lipoprotein LprD (lprD) from Mycobacterium leprae (strain TN).